A 316-amino-acid polypeptide reads, in one-letter code: Transcription initiation factor IIB (316 aa).

Residues 11–42 form a TFIIB-type zinc finger; it reads PRVTCPNHPDAILVEDYRAGDMICPECGLVVG. C15, H18, C34, and C37 together coordinate Zn(2+). Residues S70, S76, and S92 each carry the phosphoserine modification. Tandem repeats lie at residues 124–200 and 218–294. Residues K152, R154, K189, and K196 each coordinate DNA. A core promoter DNA-binding region spans residues 189-193; that stretch reads KEIGR. K238 is subject to N6-acetyllysine; by autocatalysis. A necessary for TATA box-bound complex TBP formation region spans residues 244–316; it reads LVPGRSPISV…DTPVDKLPQL (73 aa). R248 contributes to the DNA binding site. Residues 249 to 252 form a core promoter DNA-binding region; it reads SPIS. DNA contacts are provided by K272, A281, T284, R286, and R290. The core promoter DNA-binding stretch occupies residues 283 to 286; sequence VTIR.

It belongs to the TFIIB family. Found in a ternary complex with TATA box-bound TBP. Part of a TFIID-containing RNA polymerase II pre-initiation complex (PIC) that is composed of TBP and at least GTF2A1, GTF2A2, GTF2E1, GTF2E2, GTF2F1, GTF2H2, GTF2H3, GTF2H4, GTF2H5, GTF2B, TCEA1, ERCC2, ERCC3, TAF1, TAF2, TAF3, TAF4, TAF5, TAF6, TAF7, TAF8, TAF9, TAF10, TAF11, TAF12 and TAF13. Associates with TFIID-TFIIA (DA complex) to form TFIID-TFIIA-TFIIB (DAB complex), which is then recognized by RNA polymerase II (Pol II). Found in a RNA polymerase II initiation complex. Interacts (via C-terminus) with TBP; this interaction with TATA box-bound TBP guides Pol II into the PIC. Interacts (via N-terminus) with Pol II. Interacts (via C-terminus) with SSU72; this interaction is inhibited by SYMPK. Interacts with NR2F1; this interaction is direct. Interacts with PGR. Interacts with ESR1. Interacts with GTF2F1 (via C-terminus and preferentially via acetylated form); this interaction prevents binding of GTF2B to GTF2F2. Interacts with GTF2F2 (via N-terminus); this interaction is inhibited in presence of GTF2F1. Interacts with the transcription elongation factor TCEA2. Interacts with HSF1 (via transactivation domain). Interacts with GPBP1. In terms of processing, acetylated. Autoacetylated; autoacetylation at Lys-238 stimulates transcription activation.

Its subcellular location is the nucleus. It localises to the chromosome. The catalysed reaction is L-lysyl-[protein] + acetyl-CoA = N(6)-acetyl-L-lysyl-[protein] + CoA + H(+). Its function is as follows. General transcription factor that plays a role in transcription initiation by RNA polymerase II (Pol II). Involved in the pre-initiation complex (PIC) formation and Pol II recruitment at promoter DNA. Together with the TATA box-bound TBP forms the core initiation complex and provides a bridge between TBP and the Pol II-TFIIF complex. Released from the PIC early following the onset of transcription during the initiation and elongation transition and reassociates with TBP during the next transcription cycle. Associates with chromatin to core promoter-specific regions. Binds to two distinct DNA core promoter consensus sequence elements in a TBP-independent manner; these IIB-recognition elements (BREs) are localized immediately upstream (BREu), 5'-[GC][GC][GA]CGCC-3', and downstream (BREd), 5'-[GA]T[TGA][TG][GT][TG][TG]-3', of the TATA box element. Modulates transcription start site selection. Also exhibits autoacetyltransferase activity that contributes to the activated transcription. This Pongo abelii (Sumatran orangutan) protein is Transcription initiation factor IIB.